A 274-amino-acid chain; its full sequence is Phosphate import ATP-binding protein PstB (274 aa).

In terms of domain architecture, ABC transporter spans 28 to 269 (VTVRDLNFYY…PNDRRTQDYI (242 aa)). 60–67 (GPSGCGKS) is a binding site for ATP.

This sequence belongs to the ABC transporter superfamily. Phosphate importer (TC 3.A.1.7) family. The complex is composed of two ATP-binding proteins (PstB), two transmembrane proteins (PstC and PstA) and a solute-binding protein (PstS).

It is found in the cell inner membrane. It catalyses the reaction phosphate(out) + ATP + H2O = ADP + 2 phosphate(in) + H(+). Part of the ABC transporter complex PstSACB involved in phosphate import. Responsible for energy coupling to the transport system. This is Phosphate import ATP-binding protein PstB from Rhodopseudomonas palustris (strain HaA2).